We begin with the raw amino-acid sequence, 136 residues long: Ribosome-binding factor A (136 aa).

This sequence belongs to the RbfA family. In terms of assembly, monomer. Binds 30S ribosomal subunits, but not 50S ribosomal subunits or 70S ribosomes.

It is found in the cytoplasm. Functionally, one of several proteins that assist in the late maturation steps of the functional core of the 30S ribosomal subunit. Associates with free 30S ribosomal subunits (but not with 30S subunits that are part of 70S ribosomes or polysomes). Required for efficient processing of 16S rRNA. May interact with the 5'-terminal helix region of 16S rRNA. In Photorhabdus laumondii subsp. laumondii (strain DSM 15139 / CIP 105565 / TT01) (Photorhabdus luminescens subsp. laumondii), this protein is Ribosome-binding factor A.